The primary structure comprises 500 residues: NAD(P)H-quinone oxidoreductase chain 4, chloroplastic (500 aa).

14 helical membrane-spanning segments follow: residues 4 to 24 (FPWL…IFFF), 37 to 57 (ICIC…HFQL), 84 to 104 (GLSI…TLAA), 111 to 129 (SRLF…IGSF), 134 to 154 (LLLF…LLSM), 167 to 187 (FILY…GMGL), 208 to 228 (ALEI…SPII), 242 to 262 (HYST…YGLV), 272 to 292 (AHSI…IYAA), 305 to 325 (IAYS…SITD), 330 to 350 (GAIL…FLAG), 374 to 396 (IFTM…GFVA), 416 to 436 (ILIT…SLSM), and 462 to 482 (LFVS…PDFV).

Belongs to the complex I subunit 4 family.

Its subcellular location is the plastid. The protein resides in the chloroplast thylakoid membrane. It carries out the reaction a plastoquinone + NADH + (n+1) H(+)(in) = a plastoquinol + NAD(+) + n H(+)(out). The catalysed reaction is a plastoquinone + NADPH + (n+1) H(+)(in) = a plastoquinol + NADP(+) + n H(+)(out). This is NAD(P)H-quinone oxidoreductase chain 4, chloroplastic from Liriodendron tulipifera (Tuliptree).